We begin with the raw amino-acid sequence, 398 residues long: Diaminopropionate ammonia-lyase (398 aa).

Lys77 carries the post-translational modification N6-(pyridoxal phosphate)lysine.

Belongs to the diaminopropionate ammonia-lyase family. Homodimer. Pyridoxal 5'-phosphate is required as a cofactor.

It catalyses the reaction (S)-2,3-diaminopropanoate + H2O + H(+) = pyruvate + 2 NH4(+). The catalysed reaction is (R)-2,3-diaminopropanoate + H2O + H(+) = pyruvate + 2 NH4(+). Functionally, catalyzes the alpha,beta-elimination reaction of both L- and D-alpha,beta-diaminopropionate (DAP) to form pyruvate and ammonia. The D-isomer of serine is degraded to pyruvate, though very poorly; other amino acids (L-serine, D- and L-threonine, D- and L-beta-Cl-alanine) are not substrates. This is Diaminopropionate ammonia-lyase (ygeX) from Escherichia coli O157:H7.